Here is a 167-residue protein sequence, read N- to C-terminus: Ribosome maturation factor RimP (167 aa).

This sequence belongs to the RimP family.

Its subcellular location is the cytoplasm. In terms of biological role, required for maturation of 30S ribosomal subunits. The polypeptide is Ribosome maturation factor RimP (Streptomyces griseus subsp. griseus (strain JCM 4626 / CBS 651.72 / NBRC 13350 / KCC S-0626 / ISP 5235)).